We begin with the raw amino-acid sequence, 497 residues long: Signal recognition particle subunit SRP54 2 (497 aa).

A G-domain region spans residues 1 to 297 (MVLAELGGRI…DAKPFVSRLL (297 aa)). GTP is bound by residues 108–117 (GLQGEVLEKP), 192–196 (DTSGR), and 250–253 (TKMD). The interval 298–497 (GNGDMSGFVN…LMGMFGGRDE (200 aa)) is M-domain.

Belongs to the GTP-binding SRP family. SRP54 subfamily. In terms of assembly, component of a signal recognition particle (SRP) complex that consists of a 7SL RNA molecule of 300 nucleotides and six protein subunits: SRP72, SRP68, SRP54, SRP19, SRP14 and SRP9.

The protein localises to the cytoplasm. Its subcellular location is the endoplasmic reticulum. It carries out the reaction GTP + H2O = GDP + phosphate + H(+). Its function is as follows. Component of the signal recognition particle (SRP) complex, a ribonucleoprotein complex that mediates the cotranslational targeting of secretory and membrane proteins to the endoplasmic reticulum (ER). As part of the SRP complex, associates with the SRP receptor (SR) component SRPRA to target secretory proteins to the endoplasmic reticulum membrane. Binds to the signal sequence of presecretory proteins when they emerge from the ribosomes. Displays basal GTPase activity, and stimulates reciprocal GTPase activation of the SR subunit SRPRA. Forms a guanosine 5'-triphosphate (GTP)-dependent complex with the SR subunit SRPRA. SR compaction and GTPase mediated rearrangement of SR drive SRP-mediated cotranslational protein translocation into the ER. Requires the presence of SRP9/SRP14 and/or SRP19 to stably interact with RNA. The protein is Signal recognition particle subunit SRP54 2 (SRP-54B) of Arabidopsis thaliana (Mouse-ear cress).